Reading from the N-terminus, the 261-residue chain is uncharacterized protein (261 aa).

The protein resides in the plastid. Its subcellular location is the chloroplast. This is an uncharacterized protein from Mesostigma viride (Green alga).